A 216-amino-acid chain; its full sequence is Lipoprotein-releasing system ATP-binding protein LolD (216 aa).

An ABC transporter domain is found at 2–216 (IHLEGITKSF…TIHMVDGNII (215 aa)). 34 to 41 (GPSGAGKT) provides a ligand contact to ATP.

It belongs to the ABC transporter superfamily. Lipoprotein translocase (TC 3.A.1.125) family. As to quaternary structure, the complex is composed of two ATP-binding proteins (LolD) and two transmembrane proteins (LolC and LolE).

It localises to the cell inner membrane. In terms of biological role, part of the ABC transporter complex LolCDE involved in the translocation of mature outer membrane-directed lipoproteins, from the inner membrane to the periplasmic chaperone, LolA. Responsible for the formation of the LolA-lipoprotein complex in an ATP-dependent manner. The chain is Lipoprotein-releasing system ATP-binding protein LolD from Bacteroides fragilis (strain YCH46).